Here is a 189-residue protein sequence, read N- to C-terminus: UPF0301 protein PP_4995 (189 aa).

Belongs to the UPF0301 (AlgH) family.

The chain is UPF0301 protein PP_4995 from Pseudomonas putida (strain ATCC 47054 / DSM 6125 / CFBP 8728 / NCIMB 11950 / KT2440).